The following is a 308-amino-acid chain: Cytochrome b (308 aa).

4 helical membrane-spanning segments follow: residues 1 to 21, 45 to 66, 81 to 101, and 146 to 166; these read FGSLLGICLMTQIITGLLLAM, WLIRNLHANGASFFFICIYLHI, WNIGVILLLTLMATAFVGYVL, and FFALHFLLHFIIAGLTFIHLT. 2 residues coordinate heme b: His-51 and His-65. Heme b contacts are provided by His-150 and His-164. Position 169 (His-169) interacts with a ubiquinone. The next 3 membrane-spanning stretches (helical) occupy residues 194–214, 256–276, and 288–308; these read TKDALGFILLLFPLMTLAMFS, LGGVLALAASVLILLLIPLLH, and LSQFLFWTLVMNLLILTWIGS.

The protein belongs to the cytochrome b family. As to quaternary structure, the cytochrome bc1 complex contains 11 subunits: 3 respiratory subunits (MT-CYB, CYC1 and UQCRFS1), 2 core proteins (UQCRC1 and UQCRC2) and 6 low-molecular weight proteins (UQCRH/QCR6, UQCRB/QCR7, UQCRQ/QCR8, UQCR10/QCR9, UQCR11/QCR10 and a cleavage product of UQCRFS1). This cytochrome bc1 complex then forms a dimer. Heme b is required as a cofactor.

It localises to the mitochondrion inner membrane. In terms of biological role, component of the ubiquinol-cytochrome c reductase complex (complex III or cytochrome b-c1 complex) that is part of the mitochondrial respiratory chain. The b-c1 complex mediates electron transfer from ubiquinol to cytochrome c. Contributes to the generation of a proton gradient across the mitochondrial membrane that is then used for ATP synthesis. The sequence is that of Cytochrome b (MT-CYB) from Zaratornis stresemanni (White-cheeked cotinga).